The following is a 437-amino-acid chain: Repulsive guidance molecule B (437 aa).

A signal peptide spans 1–45 (MGLRAAPSSAAAAAAEVEQRRSPGLCPPPLELLLLLLFSLGLLHA). An N-linked (GlcNAc...) asparagine glycan is attached at asparagine 120. Residues 121–133 (CSKDGPTSSTNPE) show a composition bias toward polar residues. The disordered stretch occupies residues 121–153 (CSKDGPTSSTNPEVTHDPCNYHSHAGAREHRRG). Cystine bridges form between cysteine 139/cysteine 226 and cysteine 163/cysteine 312. N-linked (GlcNAc...) asparagine glycosylation occurs at asparagine 383. Asparagine 413 carries GPI-anchor amidated asparagine lipidation. A propeptide spans 414–437 (GTPRGGSDLSVSLGLTCLILIVFL) (removed in mature form).

It belongs to the repulsive guidance molecule (RGM) family. As to quaternary structure, homooligomer. Interacts with DRGX. Interacts with BMP2 and BMP4. Interacts with the BMP type I receptors ACVR1, BMPR1A and BMPR1B and with the BMP type II receptor ACVR2B. The functional complex with its receptor NEO1/neogenin appears to be a heterotetramer with a 2:2 stoichiometry, RGM molecules acting as staples that bring two NEO1 receptors together without interacting themselves, this arrangement leads to activation of downstream signaling via RhoA. Post-translationally, GPI-anchored. In terms of processing, autocatalytically cleaved at low pH; the two chains remain linked via two disulfide bonds.

It localises to the cell membrane. Its subcellular location is the membrane raft. Its function is as follows. Member of the repulsive guidance molecule (RGM) family that contributes to the patterning of the developing nervous system. Acts as a bone morphogenetic protein (BMP) coreceptor that potentiates BMP signaling. Promotes neuronal adhesion. May inhibit neurite outgrowth. The polypeptide is Repulsive guidance molecule B (Homo sapiens (Human)).